A 296-amino-acid polypeptide reads, in one-letter code: Cell surface glycoprotein CD200 receptor 3 (296 aa).

Positions 1–25 (MHALGRTLALMLLIFITILVPESSC) are cleaved as a signal peptide. Residues 26-245 (SVKGREEIPP…NRGTTSILPS (220 aa)) lie on the Extracellular side of the membrane. The 115-residue stretch at 48-162 (PDGVGVTMEI…GIFQERHSIQ (115 aa)) folds into the Ig-like V-type domain. Residues Cys-75 and Cys-146 are joined by a disulfide bond. Positions 151–232 (TDGIFQERHS…SHLTDNWILS (82 aa)) constitute an Ig-like C2-type domain. Asn-167 and Asn-199 each carry an N-linked (GlcNAc...) asparagine glycan. A disulfide bridge links Cys-172 with Cys-220. Residues 246-266 (LLSILYVKLAVTVLIVGFAFF) form a helical membrane-spanning segment. The Cytoplasmic segment spans residues 267-296 (QKRNYFSSRDLVFMKERRSKRSVWQREALG).

Belongs to the CD200R family. As to quaternary structure, isoform 3 interacts with TYROBP. Isoform 8 does not interact with TYROBP. In terms of tissue distribution, expressed in uterus and bone marrow-derived mast cells (at protein level). Expressed in uterus, spleen, bone marrow-derived dendritic, basophil and mast cells. Expressed in the lung of N.brasiliensis-infected mice. Weakly expressed in brain, testis, lung and thymus.

The protein localises to the membrane. In terms of biological role, according to PubMed:15187158 isoform 4 is a receptor for the CD200 cell surface glycoprotein. According to PubMed:16081818 isoform 4 is not a receptor for the CD200/OX2 cell surface glycoprotein. Isoform 1, isoform 2 and isoform 3 are involved in the recruitment or surface expression of the TYROBP receptor. Isoform 6, isoform 7 and isoform 8 are not involved in the recruitment or surface expression of the TYROBP receptor. This Mus musculus (Mouse) protein is Cell surface glycoprotein CD200 receptor 3 (Cd200r3).